The chain runs to 293 residues: ATP synthase gamma chain (293 aa).

It belongs to the ATPase gamma chain family. As to quaternary structure, F-type ATPases have 2 components, CF(1) - the catalytic core - and CF(0) - the membrane proton channel. CF(1) has five subunits: alpha(3), beta(3), gamma(1), delta(1), epsilon(1). CF(0) has three main subunits: a, b and c.

It is found in the cell inner membrane. Produces ATP from ADP in the presence of a proton gradient across the membrane. The gamma chain is believed to be important in regulating ATPase activity and the flow of protons through the CF(0) complex. The chain is ATP synthase gamma chain from Psychrobacter sp. (strain PRwf-1).